A 199-amino-acid polypeptide reads, in one-letter code: Protein ZNRD2 (199 aa).

The residue at position 2 (alanine 2) is an N-acetylalanine. Zn(2+) is bound by residues cysteine 53, cysteine 56, cysteine 70, and cysteine 73. Phosphoserine is present on serine 94. The segment at 100–125 (QLASASELPLGSRPAPQPPVPRPEHC) is disordered. The Nuclear export signal signature appears at 173-194 (SLETSIQLCGLIRACAEALRSL).

Homodimer. Zn(2+) is required as a cofactor.

The protein localises to the cytoplasm. Might play a role in mitosis. Antigenic molecule. Could be a centromere-associated protein. May induce anti-centromere antibodies. The polypeptide is Protein ZNRD2 (Homo sapiens (Human)).